Consider the following 253-residue polypeptide: E3 ubiquitin-protein ligase MARCHF3 (253 aa).

The RING-CH-type zinc finger occupies 63–123 (SPFNDRPMCR…ELCHFRFAVE (61 aa)). Cys71, Cys74, Cys87, Cys89, His97, Cys100, Cys113, and Cys116 together coordinate Zn(2+). 2 helical membrane-spanning segments follow: residues 145–165 (LFGD…SGWL) and 182–202 (AVGL…WTLV). Ser237 and Ser243 each carry phosphoserine.

In terms of assembly, interacts with MARCHF2 and STX6. Expressed predominantly in lung, colon and spleen. Present in liver (at protein level).

It is found in the cytoplasmic vesicle membrane. The protein resides in the early endosome membrane. The enzyme catalyses S-ubiquitinyl-[E2 ubiquitin-conjugating enzyme]-L-cysteine + [acceptor protein]-L-lysine = [E2 ubiquitin-conjugating enzyme]-L-cysteine + N(6)-ubiquitinyl-[acceptor protein]-L-lysine.. It functions in the pathway protein modification; protein ubiquitination. Its function is as follows. E3 ubiquitin-protein ligase which may be involved in endosomal trafficking. E3 ubiquitin ligases accept ubiquitin from an E2 ubiquitin-conjugating enzyme in the form of a thioester and then directly transfer the ubiquitin to targeted substrates. The chain is E3 ubiquitin-protein ligase MARCHF3 (Marchf3) from Rattus norvegicus (Rat).